The primary structure comprises 340 residues: Pilin (340 aa).

Residues 1-23 form the signal peptide; that stretch reads MKLRHLLLTGAALTSFAATTVHG. 2 consecutive cross-links (isoaspartyl lysine isopeptide (Lys-Asn)) follow at residues 36–168 and 179–303; these read KNLD…QFKN and KKVS…TFTN. Lysine 161 participates in a covalent cross-link: Threonyl lysine isopeptide (Lys-Thr) (interchain with T-311). An EVPTG sorting signal motif is present at residues 308-312; the sequence is EVPTG. Threonine 311 bears the Pentaglycyl murein peptidoglycan amidated threonine; alternate mark. Threonine 311 is covalently cross-linked (Threonyl lysine isopeptide (Thr-Lys) (interchain with K-161); alternate). A propeptide spans 312 to 340 (removed by sortase C1); sequence GVAMTVAPYIALGIVAVGGALYFVKKKNA.

Belongs to the Streptococcus pilin family. As to quaternary structure, forms columns of about 3-nanometers in diameter of head-to-tail-assembled molecules. In terms of processing, proteolytically processed and assembled in pili through a transpeptidation reaction catalyzed by the sortase C1. The last pilin subunit is cross-linked to the peptidoglycan.

It localises to the secreted. The protein localises to the cell wall. The protein resides in the fimbrium. Major component of the pilus. A stack of the pilin subunits, joined by intermolecular isopeptide bonds, forms the pilus. The pilus is required for bacterial adhesion to host cells, for bacterial aggregation, and for biofilm formation. In Streptococcus pyogenes serotype M1, this protein is Pilin.